Reading from the N-terminus, the 302-residue chain is Sulfate adenylyltransferase subunit 2 (302 aa).

Belongs to the PAPS reductase family. CysD subfamily. Heterodimer composed of CysD, the smaller subunit, and CysN.

It carries out the reaction sulfate + ATP + H(+) = adenosine 5'-phosphosulfate + diphosphate. It functions in the pathway sulfur metabolism; hydrogen sulfide biosynthesis; sulfite from sulfate: step 1/3. With CysN forms the ATP sulfurylase (ATPS) that catalyzes the adenylation of sulfate producing adenosine 5'-phosphosulfate (APS) and diphosphate, the first enzymatic step in sulfur assimilation pathway. APS synthesis involves the formation of a high-energy phosphoric-sulfuric acid anhydride bond driven by GTP hydrolysis by CysN coupled to ATP hydrolysis by CysD. The protein is Sulfate adenylyltransferase subunit 2 of Escherichia coli O9:H4 (strain HS).